The sequence spans 520 residues: GMP synthase [glutamine-hydrolyzing] (520 aa).

Residues 13–205 (KIIVLDYGSQ…ALNICKAKGD (193 aa)) enclose the Glutamine amidotransferase type-1 domain. Residue Cys-90 is the Nucleophile of the active site. Active-site residues include His-179 and Glu-181. One can recognise a GMPS ATP-PPase domain in the interval 206-395 (WSMDNFIDMQ…LGMPDHIVWR (190 aa)). 233-239 (SGGVDSS) is an ATP binding site.

Homodimer.

It catalyses the reaction XMP + L-glutamine + ATP + H2O = GMP + L-glutamate + AMP + diphosphate + 2 H(+). The protein operates within purine metabolism; GMP biosynthesis; GMP from XMP (L-Gln route): step 1/1. Functionally, catalyzes the synthesis of GMP from XMP. In Streptococcus pneumoniae (strain ATCC 700669 / Spain 23F-1), this protein is GMP synthase [glutamine-hydrolyzing].